The primary structure comprises 261 residues: Carnitinyl-CoA dehydratase (261 aa).

Glu111 functions as the Nucleophile in the catalytic mechanism. Glu131 serves as the catalytic Proton acceptor.

Belongs to the enoyl-CoA hydratase/isomerase family.

It catalyses the reaction (R)-carnitinyl-CoA = crotonobetainyl-CoA + H2O. Its pathway is amine and polyamine metabolism; carnitine metabolism. Its function is as follows. Catalyzes the reversible dehydration of L-carnitinyl-CoA to crotonobetainyl-CoA. This is Carnitinyl-CoA dehydratase from Salmonella arizonae (strain ATCC BAA-731 / CDC346-86 / RSK2980).